We begin with the raw amino-acid sequence, 250 residues long: Complement factor B-like protease (250 aa).

Sushi domains lie at 3–73 (TRCD…KCRA), 74–133 (VWCP…VCDD), and 136–193 (GDCP…QCRA). 6 disulfide bridges follow: Cys5–Cys44, Cys30–Cys71, Cys76–Cys118, Cys104–Cys131, Cys138–Cys178, and Cys164–Cys191. The N-linked (GlcNAc...) asparagine glycan is linked to Asn115. The N-linked (GlcNAc...) asparagine glycan is linked to Asn221.

Belongs to the peptidase S1 family. Plasma.

It is found in the secreted. Functionally, required in both the classical and alternate pathways of the complement system. In Gallus gallus (Chicken), this protein is Complement factor B-like protease.